A 208-amino-acid chain; its full sequence is Small ribosomal subunit protein uS4 (208 aa).

The S4 RNA-binding domain occupies 98-159 (RRLDNVVYRL…KSRKIVSIND (62 aa)).

The protein belongs to the universal ribosomal protein uS4 family. As to quaternary structure, part of the 30S ribosomal subunit. Contacts protein S5. The interaction surface between S4 and S5 is involved in control of translational fidelity.

Functionally, one of the primary rRNA binding proteins, it binds directly to 16S rRNA where it nucleates assembly of the body of the 30S subunit. Its function is as follows. With S5 and S12 plays an important role in translational accuracy. This chain is Small ribosomal subunit protein uS4, found in Pelobacter propionicus (strain DSM 2379 / NBRC 103807 / OttBd1).